The sequence spans 846 residues: Neurofilament medium polypeptide (846 aa).

Positions 1 to 10 are enriched in polar residues; the sequence is MSYTLDSLGN. The disordered stretch occupies residues 1-52; that stretch reads MSYTLDSLGNPSAYRRVPTETRSSFSRVSGSPSSGFRSQSWSRGSPSTVSSS. Residue Ser2 is modified to N-acetylserine. Residues 2 to 104 are head; the sequence is SYTLDSLGNP…LSRSNEKEQL (103 aa). Residues 22-45 show a composition bias toward low complexity; sequence RSSFSRVSGSPSSGFRSQSWSRGS. Ser31 is modified (phosphoserine). At Arg43 the chain carries Omega-N-methylarginine. O-linked (GlcNAc) threonine glycosylation occurs at Thr48. Phosphoserine is present on Ser98. One can recognise an IF rod domain in the interval 100–411; that stretch reads EKEQLQGLND…KLLEGEETRF (312 aa). The coil 1A stretch occupies residues 104–135; that stretch reads LQGLNDRFAGYIEKVHYLEQQNKEIEAEIHAL. Residues 136 to 148 form a linker 1 region; sequence RQKQASHAQLGDA. Residues 149 to 247 form a coil 1B region; it reads YDQEIRELRA…EEEVADLLAQ (99 aa). Ser225 carries the phosphoserine modification. The linker 12 stretch occupies residues 248-264; it reads IQASHITVERKDYLKTD. Residues 265–286 form a coil 2A region; it reads ISTALKEIRSQLECHSDQNMHQ. The linker 2 stretch occupies residues 287 to 290; that stretch reads AEEW. The interval 291–411 is coil 2B; sequence FKCRYAKLTE…KLLEGEETRF (121 aa). The residue at position 319 (Tyr319) is a Phosphotyrosine. Residues Ser345, Ser417, and Ser429 each carry the phosphoserine modification. The tail stretch occupies residues 412–845; that stretch reads STFSGSITGP…HAIVKEVTQG (434 aa). A glycan (O-linked (GlcNAc) threonine) is linked at Thr431. 2 positions are modified to phosphoserine: Ser467 and Ser483. The disordered stretch occupies residues 483 to 783; that stretch reads SAKEEKEEAE…GEDRSDDKVV (301 aa). A compositionally biased stretch (acidic residues) spans 489 to 499; it reads EEAEEKEEEPE. Residues 500–510 are compositionally biased toward basic and acidic residues; sequence VEKSPVKSPEA. 2 positions are modified to phosphoserine: Ser503 and Ser507. Acidic residues predominate over residues 511 to 533; sequence KEEEEGEKEEEEEGQEEEEEEDE. Residues 534–553 are compositionally biased toward basic and acidic residues; that stretch reads GVKSDQAEEGGSEKEGSSEK. Ser537, Ser545, Ser550, and Ser551 each carry phosphoserine. A compositionally biased stretch (acidic residues) spans 554-575; that stretch reads DEGEQEEEGETEAEGEGEEAEA. At Thr564 the chain carries Phosphothreonine. A compositionally biased stretch (basic and acidic residues) spans 576–603; the sequence is KEEKKTEGKVEEMAIKEEIKVEKPEKAK. Residues Ser604, Ser609, Ser643, Ser667, Ser687, Ser713, Ser721, Ser751, and Ser767 each carry the phosphoserine modification. Composition is skewed to basic and acidic residues over residues 610–675 and 687–709; these read PVEE…KAVE and SLEK…KAEE. Basic and acidic residues-rich tracts occupy residues 718-730 and 746-758; these read GDKS…KEDI and TQEK…EEKG. Residues 769–783 are compositionally biased toward basic and acidic residues; that stretch reads AEEKKGEDRSDDKVV.

The protein belongs to the intermediate filament family. As to quaternary structure, forms heterodimers with NEFL; which can further hetero-oligomerize (in vitro). Forms heterodimers with INA (in vitro). There are a number of repeats of the tripeptide K-S-P, NFM is phosphorylated on a number of the serines in this motif. It is thought that phosphorylation of NFM results in the formation of interfilament cross bridges that are important in the maintenance of axonal caliber. In terms of processing, phosphorylation seems to play a major role in the functioning of the larger neurofilament polypeptides (NF-M and NF-H), the levels of phosphorylation being altered developmentally and coincidentally with a change in the neurofilament function. Post-translationally, phosphorylated in the head and rod regions by the PKC kinase PKN1, leading to the inhibition of polymerization. In terms of tissue distribution, expressed in the dorsal root ganglion neurons (at protein level).

It is found in the cytoplasm. The protein resides in the cytoskeleton. It localises to the cell projection. The protein localises to the axon. Functionally, neurofilaments usually contain three intermediate filament proteins: NEFL, NEFM, and NEFH which are involved in the maintenance of neuronal caliber. May additionally cooperate with the neuronal intermediate filament proteins PRPH and INA to form neuronal filamentous networks. The protein is Neurofilament medium polypeptide (Nefm) of Rattus norvegicus (Rat).